The primary structure comprises 420 residues: UDP-glucuronic acid decarboxylase 1 (420 aa).

M1 carries the post-translational modification N-acetylmethionine. Residues M1–K19 are Cytoplasmic-facing. A helical; Signal-anchor for type II membrane protein transmembrane segment spans residues L20–M40. Topologically, residues R41–N420 are lumenal. A Phosphothreonine modification is found at T94. G98, F99, V100, D119, N120, F122, T123, G124, D144, and V145 together coordinate NAD(+). UDP-alpha-D-glucuronate is bound by residues L149 and Y150. Residues L159 and S161 each coordinate NAD(+). K177 contacts UDP-alpha-D-glucuronate. Position 178 (T178) interacts with NAD(+). 4 residues coordinate UDP-alpha-D-glucuronate: N185, G188, K191, and R192. 3 residues coordinate NAD(+): A200, Y231, and K235. Y231 (proton acceptor) is an active-site residue. The UDP-alpha-D-glucuronate site is built by Y245, Q248, and E249. Positions 261, 267, and 272 each coordinate NAD(+). N-linked (GlcNAc...) asparagine glycosylation is present at N316.

This sequence belongs to the NAD(P)-dependent epimerase/dehydratase family. UDP-glucuronic acid decarboxylase subfamily. Homodimer and homotetramer. Interacts with AKT1. NAD(+) is required as a cofactor.

It is found in the golgi apparatus. Its subcellular location is the golgi stack membrane. The catalysed reaction is UDP-alpha-D-glucuronate + H(+) = UDP-alpha-D-xylose + CO2. It functions in the pathway nucleotide-sugar biosynthesis; UDP-alpha-D-xylose biosynthesis; UDP-alpha-D-xylose from UDP-alpha-D-glucuronate: step 1/1. Functionally, catalyzes the NAD-dependent decarboxylation of UDP-glucuronic acid to UDP-xylose. Necessary for the biosynthesis of the core tetrasaccharide in glycosaminoglycan biosynthesis. In Pongo abelii (Sumatran orangutan), this protein is UDP-glucuronic acid decarboxylase 1 (UXS1).